A 98-amino-acid polypeptide reads, in one-letter code: uncharacterized protein (98 aa).

A signal peptide spans 1–23 (MKKMQSIVLALSLVLVAPMAAQA). The disordered stretch occupies residues 68–98 (WHLHGPPPPPRHHKKAPHDHHGGHGPGKHHR). Residues 77–98 (PRHHKKAPHDHHGGHGPGKHHR) are compositionally biased toward basic residues.

It to E.coli YpeC.

This is an uncharacterized protein from Escherichia coli (strain K12).